Here is a 434-residue protein sequence, read N- to C-terminus: Methylenetetrahydrofolate--tRNA-(uracil-5-)-methyltransferase TrmFO (434 aa).

Gly-10–Gly-15 is an FAD binding site.

The protein belongs to the MnmG family. TrmFO subfamily. Requires FAD as cofactor.

The protein localises to the cytoplasm. It carries out the reaction uridine(54) in tRNA + (6R)-5,10-methylene-5,6,7,8-tetrahydrofolate + NADH + H(+) = 5-methyluridine(54) in tRNA + (6S)-5,6,7,8-tetrahydrofolate + NAD(+). The catalysed reaction is uridine(54) in tRNA + (6R)-5,10-methylene-5,6,7,8-tetrahydrofolate + NADPH + H(+) = 5-methyluridine(54) in tRNA + (6S)-5,6,7,8-tetrahydrofolate + NADP(+). In terms of biological role, catalyzes the folate-dependent formation of 5-methyl-uridine at position 54 (M-5-U54) in all tRNAs. This is Methylenetetrahydrofolate--tRNA-(uracil-5-)-methyltransferase TrmFO from Bacillus cytotoxicus (strain DSM 22905 / CIP 110041 / 391-98 / NVH 391-98).